A 104-amino-acid chain; its full sequence is NADH-quinone oxidoreductase subunit K (104 aa).

The next 3 membrane-spanning stretches (helical) occupy residues 4 to 24 (VPAS…LFGA), 31 to 51 (VIVL…LVAF), and 67 to 87 (LFTM…LIAL).

This sequence belongs to the complex I subunit 4L family. As to quaternary structure, NDH-1 is composed of 14 different subunits. Subunits NuoA, H, J, K, L, M, N constitute the membrane sector of the complex.

The protein localises to the cell membrane. The enzyme catalyses a quinone + NADH + 5 H(+)(in) = a quinol + NAD(+) + 4 H(+)(out). In terms of biological role, NDH-1 shuttles electrons from NADH, via FMN and iron-sulfur (Fe-S) centers, to quinones in the respiratory chain. The immediate electron acceptor for the enzyme in this species is believed to be a menaquinone. Couples the redox reaction to proton translocation (for every two electrons transferred, four hydrogen ions are translocated across the cytoplasmic membrane), and thus conserves the redox energy in a proton gradient. The chain is NADH-quinone oxidoreductase subunit K from Bacillus cereus (strain G9842).